A 311-amino-acid chain; its full sequence is Protoheme IX farnesyltransferase (311 aa).

Transmembrane regions (helical) follow at residues 39-59 (LLAM…PIGE), 61-81 (LPEI…AGAF), 111-131 (ALVL…VASP), 133-153 (AALF…MWSK), 162-182 (IGSV…SGDL), 187-207 (IIGL…AIAI), 246-266 (FFFV…SLIW), and 287-307 (FVFS…FSLL).

It belongs to the UbiA prenyltransferase family. Protoheme IX farnesyltransferase subfamily. In terms of assembly, interacts with CtaA.

It localises to the cell membrane. It carries out the reaction heme b + (2E,6E)-farnesyl diphosphate + H2O = Fe(II)-heme o + diphosphate. It functions in the pathway porphyrin-containing compound metabolism; heme O biosynthesis; heme O from protoheme: step 1/1. Its function is as follows. Converts heme B (protoheme IX) to heme O by substitution of the vinyl group on carbon 2 of heme B porphyrin ring with a hydroxyethyl farnesyl side group. The sequence is that of Protoheme IX farnesyltransferase from Shouchella clausii (strain KSM-K16) (Alkalihalobacillus clausii).